The following is a 355-amino-acid chain: NADH-quinone oxidoreductase subunit H (355 aa).

8 consecutive transmembrane segments (helical) span residues 25-45, 91-111, 126-146, 170-190, 205-225, 253-273, 290-310, and 330-350; these read IVRI…LILW, WLYL…WAVI, LLYA…AGWA, MGFA…SEIV, FLSW…VSGI, MAFA…SALA, FIPG…VFIW, and VFLP…MSPL.

This sequence belongs to the complex I subunit 1 family. In terms of assembly, NDH-1 is composed of 14 different subunits. Subunits NuoA, H, J, K, L, M, N constitute the membrane sector of the complex.

The protein resides in the cell inner membrane. The enzyme catalyses a quinone + NADH + 5 H(+)(in) = a quinol + NAD(+) + 4 H(+)(out). NDH-1 shuttles electrons from NADH, via FMN and iron-sulfur (Fe-S) centers, to quinones in the respiratory chain. The immediate electron acceptor for the enzyme in this species is believed to be ubiquinone. Couples the redox reaction to proton translocation (for every two electrons transferred, four hydrogen ions are translocated across the cytoplasmic membrane), and thus conserves the redox energy in a proton gradient. This subunit may bind ubiquinone. This chain is NADH-quinone oxidoreductase subunit H, found in Burkholderia ambifaria (strain MC40-6).